The chain runs to 704 residues: Protein arginine N-methyltransferase 7 (704 aa).

2 consecutive SAM-dependent MTase PRMT-type domains span residues 14 to 356 and 366 to 704; these read ENTW…YSLW and SQPA…EKSE.

The protein belongs to the class I-like SAM-binding methyltransferase superfamily. Protein arginine N-methyltransferase family. PRMT7 subfamily.

Its function is as follows. Essential arginine methyltransferase that can both catalyze the formation of omega-N monomethylarginine (MMA) and symmetrical dimethylarginine (sDMA). Specifically mediates the symmetrical dimethylation of arginine residues in the small nuclear ribonucleoproteins SmD1 and SmD3. The chain is Protein arginine N-methyltransferase 7 (Art7) from Drosophila grimshawi (Hawaiian fruit fly).